We begin with the raw amino-acid sequence, 836 residues long: Hypoxia-inducible factor 1-alpha (836 aa).

The interval 1-30 (MEGAGGENEKKKMSSERRKEKSRDAARSRR) is disordered. The tract at residues 1–401 (MEGAGGENEK…KEPDALTLLA (401 aa)) is interaction with TSGA10. Over residues 7–30 (ENEKKKMSSERRKEKSRDAARSRR) the composition is skewed to basic and acidic residues. The 54-residue stretch at 17-70 (RRKEKSRDAARSRRSKESEVFYELAHQLPLPHNVSSHLDKASVMRLTISYLRVR) folds into the bHLH domain. The interval 21–30 (KSRDAARSRR) is DNA-binding. The PAS 1 domain maps to 80–155 (SEDEMKAQMD…EMLTHRNGPV (76 aa)). The tract at residues 170 to 191 (RMKCTLTSRGRTMNIKSATWKV) is required for heterodimer formation with ARNT. Residues 228-298 (PHPSNIEIPL…KTHHDMFTKG (71 aa)) form the PAS 2 domain. The residue at position 247 (Ser247) is a Phosphoserine; by CK1. In terms of domain architecture, PAC spans 302 to 345 (TGQYRMLAKRGGYVWVETQATVIYNTKNSQPQCIVCVNYVVSGI). An N-terminal VHL recognition site region spans residues 380–417 (SEDTSCLFDKLKKEPDALTLLAPAAGDTIISLDFGSDD). Lys391 participates in a covalent cross-link: Glycyl lysine isopeptide (Lys-Gly) (interchain with G-Cter in SUMO). An ODD region spans residues 401–613 (APAAGDTIIS…PSMSTVTGFQ (213 aa)). A 4-hydroxyproline modification is found at Pro402. Lys476 participates in a covalent cross-link: Glycyl lysine isopeptide (Lys-Gly) (interchain with G-Cter in SUMO). The interval 492–511 (QIQDQPASPSDGSTRQSSPE) is disordered. The segment at 544-588 (FKLELVEKLFAEDTEAKNPFSTQDTDLDLEMLAPYIPMDDDFQLR) is NTAD. An N6-acetyllysine; alternate modification is found at Lys545. Residues Lys545, Lys551, and Lys560 each participate in a glycyl lysine isopeptide (Lys-Gly) (interchain with G-Cter in ubiquitin) cross-link. Lys545 is covalently cross-linked (Glycyl lysine isopeptide (Lys-Gly) (interchain with G-Cter in ubiquitin); alternate). Phosphoserine; by GSK3-beta is present on Ser564. A Phosphothreonine; by GSK3-beta modification is found at Thr568. The C-terminal VHL recognition site stretch occupies residues 569–585 (DLDLEMLAPYIPMDDDF). A 4-hydroxyproline modification is found at Pro577. Position 589 is a phosphoserine; by PLK3 (Ser589). The ID stretch occupies residues 589-795 (SFDQLSPLES…SDLACRLLGQ (207 aa)). Disordered regions lie at residues 593 to 684 (LSPL…DRAG) and 707 to 734 (QRNT…KMEH). Ser602 is modified (phosphoserine; by GSK3-beta). The span at 608–620 (TVTGFQQTQLQKP) shows a compositional bias: polar residues. Over residues 621–632 (TITATATTTATT) the composition is skewed to low complexity. The span at 633–647 (DESKTETKDNKEDIK) shows a compositional bias: basic and acidic residues. The span at 652-678 (SPSSTQVPQETTTAKASAYSGTHSRTA) shows a compositional bias: polar residues. Ser668 is modified (phosphoserine; by PLK3). An N6-acetyllysine modification is found at Lys719. The short motif at 728 to 731 (RKRK) is the Nuclear localization signal element. The interval 796–836 (SMDESGLPQLTSYDCEVNAPIQGSRNLLQGEELLRALDQVN) is CTAD. Residue Cys810 is modified to S-nitrosocysteine. At Asn813 the chain carries (3S)-3-hydroxyasparagine.

As to quaternary structure, interacts with the ARNT; forms a heterodimer that binds core DNA sequence 5'-TACGTG-3' within the hypoxia response element (HRE) of target gene promoters. Interacts with COPS5; the interaction increases the transcriptional activity of HIF1A through increased stability. Interacts with EP300 (via TAZ-type 1 domains); the interaction is stimulated in response to hypoxia and inhibited by CITED2. Interacts with CREBBP (via TAZ-type 1 domains). Interacts with NCOA1, NCOA2, APEX1 and HSP90. Interacts (hydroxylated within the ODD domain) with VHLL (via beta domain); the interaction, leads to polyubiquitination and subsequent HIF1A proteasomal degradation. During hypoxia, sumoylated HIF1A also binds VHL; the interaction promotes the ubiquitination of HIF1A. Interacts with SENP1; the interaction desumoylates HIF1A resulting in stabilization and activation of transcription. Interacts (via the ODD domain) with NAA10; the interaction appears not to acetylate HIF1A nor have any affect on protein stability, during hypoxia. Interacts with RWDD3; the interaction enhances HIF1A sumoylation. Interacts with TSGA10. Interacts with HIF3A. Interacts with RORA (via the DNA binding domain); the interaction enhances HIF1A transcription under hypoxia through increasing protein stability. Interaction with PSMA7 inhibits the transactivation activity of HIF1A under both normoxic and hypoxia-mimicking conditions. Interacts with USP20. Interacts with RACK1; promotes HIF1A ubiquitination and proteasome-mediated degradation. Interacts (via N-terminus) with USP19. Interacts with SIRT2. Interacts (deacetylated form) with EGLN1. Interacts with CBFA2T3. Interacts with HSP90AA1 and HSP90AB1. Interacts with DCUN1D1; this interaction increases the interaction between VHL and DCUN1D1. Interacts with HIF1AN. S-nitrosylation of Cys-810 may be responsible for increased recruitment of p300 coactivator necessary for transcriptional activity of HIF-1 complex. In terms of processing, requires phosphorylation for DNA-binding. Phosphorylation at Ser-247 by CSNK1D/CK1 represses kinase activity and impairs ARNT binding. Phosphorylation by GSK3-beta and PLK3 promote degradation by the proteasome. Post-translationally, sumoylated; with SUMO1 under hypoxia. Sumoylation is enhanced through interaction with RWDD3. Both sumoylation and desumoylation seem to be involved in the regulation of its stability during hypoxia. Sumoylation can promote either its stabilization or its VHL-dependent degradation by promoting hydroxyproline-independent HIF1A-VHL complex binding, thus leading to HIF1A ubiquitination and proteasomal degradation. Desumoylation by SENP1 increases its stability amd transcriptional activity. There is a disaccord between various publications on the effect of sumoylation and desumoylation on its stability and transcriptional activity. Acetylation of Lys-545 by ARD1 increases interaction with VHL and stimulates subsequent proteasomal degradation. Deacetylation of Lys-719 by SIRT2 increases its interaction with and hydroxylation by EGLN1 thereby inactivating HIF1A activity by inducing its proteasomal degradation. In terms of processing, ubiquitinated; in normoxia, following hydroxylation and interaction with VHL. Lys-545 appears to be the principal site of ubiquitination. Clioquinol, the Cu/Zn-chelator, inhibits ubiquitination through preventing hydroxylation at Asn-813. Ubiquitinated by E3 ligase VHL. Deubiquitinated by UCHL1. Post-translationally, the iron and 2-oxoglutarate dependent 3-hydroxylation of asparagine is (S) stereospecific within HIF CTAD domains. In normoxia, is hydroxylated on Pro-402 and Pro-577 in the oxygen-dependent degradation domain (ODD) by EGLN1/PHD2 and EGLN2/PHD1. EGLN3/PHD3 has also been shown to hydroxylate Pro-577. The hydroxylated prolines promote interaction with VHL, initiating rapid ubiquitination and subsequent proteasomal degradation. Deubiquitinated by USP20. Under hypoxia, proline hydroxylation is impaired and ubiquitination is attenuated, resulting in stabilization. In normoxia, is hydroxylated on Asn-813 by HIF1AN, thus abrogating interaction with CREBBP and EP300 and preventing transcriptional activation. Repressed by iron ion, via Fe(2+) prolyl hydroxylase (PHD) enzymes-mediated hydroxylation and subsequent proteasomal degradation. Ubiquitous.

It localises to the cytoplasm. It is found in the nucleus. Its subcellular location is the nucleus speckle. Induced by reactive oxygen species (ROS). Its function is as follows. Functions as a master transcriptional regulator of the adaptive response to hypoxia. Under hypoxic conditions, activates the transcription of over 40 genes, including erythropoietin, glucose transporters, glycolytic enzymes, vascular endothelial growth factor, HILPDA, and other genes whose protein products increase oxygen delivery or facilitate metabolic adaptation to hypoxia. Plays an essential role in embryonic vascularization, tumor angiogenesis and pathophysiology of ischemic disease. Heterodimerizes with ARNT; heterodimer binds to core DNA sequence 5'-TACGTG-3' within the hypoxia response element (HRE) of target gene promoters. Activation requires recruitment of transcriptional coactivators such as CREBBP and EP300. Activity is enhanced by interaction with NCOA1 and/or NCOA2. Interaction with redox regulatory protein APEX1 seems to activate CTAD and potentiates activation by NCOA1 and CREBBP. Involved in the axonal distribution and transport of mitochondria in neurons during hypoxia. The sequence is that of Hypoxia-inducible factor 1-alpha (Hif1a) from Mus musculus (Mouse).